A 113-amino-acid polypeptide reads, in one-letter code: Putative pterin-4-alpha-carbinolamine dehydratase (113 aa).

Belongs to the pterin-4-alpha-carbinolamine dehydratase family.

It catalyses the reaction (4aS,6R)-4a-hydroxy-L-erythro-5,6,7,8-tetrahydrobiopterin = (6R)-L-erythro-6,7-dihydrobiopterin + H2O. The polypeptide is Putative pterin-4-alpha-carbinolamine dehydratase (Nitrosospira multiformis (strain ATCC 25196 / NCIMB 11849 / C 71)).